A 1057-amino-acid chain; its full sequence is Carbamoyl phosphate synthase large chain (1057 aa).

The carboxyphosphate synthetic domain stretch occupies residues 1-401; it reads MPKNKDINTI…SLLKAIRSLE (401 aa). Arginine 129, arginine 169, glycine 175, glycine 176, lysine 208, isoleucine 210, glutamate 215, glycine 241, isoleucine 242, histidine 243, glutamine 284, and glutamate 298 together coordinate ATP. Residues 133–327 form the ATP-grasp 1 domain; sequence RSLMNELDVP…IAKLAAKIAV (195 aa). Mg(2+) contacts are provided by glutamine 284, glutamate 298, and asparagine 300. Glutamine 284, glutamate 298, and asparagine 300 together coordinate Mn(2+). Residues 402 to 546 form an oligomerization domain region; it reads YGVHHLGLPN…YGTYERDNES (145 aa). Residues 547-929 form a carbamoyl phosphate synthetic domain region; sequence VVTDKEKVIV…ALFKGLTASG (383 aa). Residues 671–861 form the ATP-grasp 2 domain; the sequence is EALLNKIDVP…MAQLAMRAIL (191 aa). Arginine 707, arginine 746, leucine 748, glutamate 752, glycine 777, valine 778, histidine 779, serine 780, glutamine 820, and glutamate 832 together coordinate ATP. Glutamine 820, glutamate 832, and asparagine 834 together coordinate Mg(2+). Mn(2+) contacts are provided by glutamine 820, glutamate 832, and asparagine 834. In terms of domain architecture, MGS-like spans 930–1057; sequence VEVKDHGTVL…ESMSFTMKQM (128 aa). Residues 930 to 1057 form an allosteric domain region; that stretch reads VEVKDHGTVL…ESMSFTMKQM (128 aa).

The protein belongs to the CarB family. Composed of two chains; the small (or glutamine) chain promotes the hydrolysis of glutamine to ammonia, which is used by the large (or ammonia) chain to synthesize carbamoyl phosphate. Tetramer of heterodimers (alpha,beta)4. Requires Mg(2+) as cofactor. Mn(2+) is required as a cofactor.

It catalyses the reaction hydrogencarbonate + L-glutamine + 2 ATP + H2O = carbamoyl phosphate + L-glutamate + 2 ADP + phosphate + 2 H(+). The enzyme catalyses hydrogencarbonate + NH4(+) + 2 ATP = carbamoyl phosphate + 2 ADP + phosphate + 2 H(+). It functions in the pathway amino-acid biosynthesis; L-arginine biosynthesis; carbamoyl phosphate from bicarbonate: step 1/1. The protein operates within pyrimidine metabolism; UMP biosynthesis via de novo pathway; (S)-dihydroorotate from bicarbonate: step 1/3. In terms of biological role, large subunit of the glutamine-dependent carbamoyl phosphate synthetase (CPSase). CPSase catalyzes the formation of carbamoyl phosphate from the ammonia moiety of glutamine, carbonate, and phosphate donated by ATP, constituting the first step of 2 biosynthetic pathways, one leading to arginine and/or urea and the other to pyrimidine nucleotides. The large subunit (synthetase) binds the substrates ammonia (free or transferred from glutamine from the small subunit), hydrogencarbonate and ATP and carries out an ATP-coupled ligase reaction, activating hydrogencarbonate by forming carboxy phosphate which reacts with ammonia to form carbamoyl phosphate. This is Carbamoyl phosphate synthase large chain from Staphylococcus carnosus (strain TM300).